The chain runs to 519 residues: Ribose import ATP-binding protein RbsA 2 (519 aa).

ABC transporter domains follow at residues 15–252 and 262–506; these read FRLR…VGRP and HEPG…TGVR. Residue 47-54 coordinates ATP; the sequence is GENGAGKS.

It belongs to the ABC transporter superfamily. Ribose importer (TC 3.A.1.2.1) family. As to quaternary structure, the complex is composed of an ATP-binding protein (RbsA), two transmembrane proteins (RbsC) and a solute-binding protein (RbsB).

The protein resides in the cell membrane. The enzyme catalyses D-ribose(out) + ATP + H2O = D-ribose(in) + ADP + phosphate + H(+). Functionally, part of the ABC transporter complex RbsABC involved in ribose import. Responsible for energy coupling to the transport system. The sequence is that of Ribose import ATP-binding protein RbsA 2 from Rubrobacter xylanophilus (strain DSM 9941 / JCM 11954 / NBRC 16129 / PRD-1).